Here is a 1064-residue protein sequence, read N- to C-terminus: Importin-13 homolog A (1064 aa).

Positions 40 to 109 constitute an Importin N-terminal domain; sequence ALPQIQQWLI…LDNLLLFLKT (70 aa). 2 disordered regions span residues 695–722 and 839–860; these read TTQQ…NNNN and NNKK…NENN. Residues 700-722 are compositionally biased toward low complexity; sequence NNNNNNNNNNNNNNNNNNNNNNN.

This sequence belongs to the importin beta family. Forms a complex with an importin alpha subunit.

The protein resides in the cytoplasm. The protein localises to the nucleus envelope. In terms of biological role, required for nuclear protein import and mediates docking of import substrate to distinct nucleoporins. In Dictyostelium discoideum (Social amoeba), this protein is Importin-13 homolog A (ipo13A).